The sequence spans 274 residues: Large ribosomal subunit protein uL2cz/uL2cy (274 aa).

The disordered stretch occupies residues 224–253 (NPIDHPHGGGEGRAPIGRKKPTTPWGYPAL).

It belongs to the universal ribosomal protein uL2 family. Part of the 50S ribosomal subunit.

The protein resides in the plastid. The chain is Large ribosomal subunit protein uL2cz/uL2cy (rpl2-A) from Epifagus virginiana (Beechdrops).